Consider the following 224-residue polypeptide: UPF0758 protein BPUM_2444 (224 aa).

The MPN domain maps to 102–224 (VIRTPEDGAN…FVSLKEKGYL (123 aa)). Residues His173, His175, and Asp186 each coordinate Zn(2+). The short motif at 173–186 (HNHPSGDPTPSRED) is the JAMM motif element.

This sequence belongs to the UPF0758 family.

The sequence is that of UPF0758 protein BPUM_2444 from Bacillus pumilus (strain SAFR-032).